Here is a 68-residue protein sequence, read N- to C-terminus: Large ribosomal subunit protein uL29 (68 aa).

Residues 32-68 are disordered; that stretch reads QDQLKRRTGSLDNPAERTQHRRDLARVLTVLTQKTKA. Basic and acidic residues predominate over residues 45 to 56; the sequence is PAERTQHRRDLA.

The protein belongs to the universal ribosomal protein uL29 family.

The polypeptide is Large ribosomal subunit protein uL29 (Myxococcus xanthus (strain DK1622)).